The chain runs to 182 residues: Translation initiation factor IF-3 (182 aa).

The segment at M1–I22 is disordered.

It belongs to the IF-3 family. Monomer.

The protein resides in the cytoplasm. Its function is as follows. IF-3 binds to the 30S ribosomal subunit and shifts the equilibrium between 70S ribosomes and their 50S and 30S subunits in favor of the free subunits, thus enhancing the availability of 30S subunits on which protein synthesis initiation begins. The chain is Translation initiation factor IF-3 from Xanthomonas campestris pv. campestris (strain ATCC 33913 / DSM 3586 / NCPPB 528 / LMG 568 / P 25).